A 428-amino-acid polypeptide reads, in one-letter code: Acetyltransferase sirH (428 aa).

Residue Asn-8 is glycosylated (N-linked (GlcNAc...) asparagine). The next 6 helical transmembrane spans lie at 33-53 (LLTP…PGPL), 55-75 (VIVG…HWVS), 78-98 (AFFM…LMFV), 305-325 (LYVG…LIPS), 329-349 (GWGM…EDIL), and 366-386 (FLGY…PVGF).

It belongs to the wax synthase family.

The protein localises to the membrane. Its pathway is polyketide biosynthesis. Acetyltransferase; part of the gene cluster that mediates the biosynthesis of asperlin, a polyketide showing anti-inflammatory, antitumor and antibiotic activities. The first step of the asperlin biosynthesis is the production of the intermediate 2,4,6-octatrienoic acid by the highly redusing polyketide synthase alnA with cleavage of the PKS product by the esterase alnB. 2,4,6-octatrienoic acid is further converted to asperlin via several steps involving the remaining enzymes from the cluster. The chain is Acetyltransferase sirH from Emericella nidulans (strain FGSC A4 / ATCC 38163 / CBS 112.46 / NRRL 194 / M139) (Aspergillus nidulans).